Consider the following 212-residue polypeptide: Ubiquitin-like protein MDY2 (212 aa).

A Ubiquitin-like domain is found at 74–152 (VHLTLKKIQA…TITVMIKPNP (79 aa)). The disordered stretch occupies residues 150-177 (PNPTISKEPEAEKSTNSPAPAPPQELTV).

As to quaternary structure, interacts with GET4.

The protein localises to the cytoplasm. Its subcellular location is the cytosol. The protein resides in the nucleus. In terms of biological role, required for efficient mating. Involved in the production of alpha-factor, the KAR9 and TUB1 location to the shmoo tip and nuclear migration into pheromone-induced shmoos. The chain is Ubiquitin-like protein MDY2 (MDY2) from Saccharomyces cerevisiae (strain ATCC 204508 / S288c) (Baker's yeast).